Here is a 334-residue protein sequence, read N- to C-terminus: Amino acid--[acyl-carrier-protein] ligase 2 (334 aa).

A Zn(2+)-binding site is contributed by Cys131. Residues Arg159, Glu161, and 168–169 (RL) contribute to the ATP site. Glu176 is a Zn(2+) binding site. Glu176 contributes to the an L-alpha-amino acid binding site. ATP contacts are provided by residues Lys235 and 250 to 253 (ACMS). Cys279 contacts Zn(2+). Position 286 (Arg286) interacts with ATP.

Belongs to the class-II aminoacyl-tRNA synthetase family. Amino acid--[acyl-carrier-protein] ligase subfamily. Homodimer. Zn(2+) is required as a cofactor.

The enzyme catalyses an L-alpha-amino acid + holo-[ACP] + ATP = an L-alpha-aminoacyl-[ACP] + AMP + diphosphate. Functionally, catalyzes the ATP-dependent activation of L-glycine and its transfer to the phosphopantetheine prosthetic group covalently attached to the vicinal carrier protein blr6284 of yet unknown function. May participate in nonribosomal peptide synthesis or related processes. L-alanine is a poor substrate whereas L-serine or D-amino acids are not substrates for ATP-dependent activation. Does not display tRNA aminoacylation activity. The chain is Amino acid--[acyl-carrier-protein] ligase 2 from Bradyrhizobium diazoefficiens (strain JCM 10833 / BCRC 13528 / IAM 13628 / NBRC 14792 / USDA 110).